Reading from the N-terminus, the 437-residue chain is Glutamate-1-semialdehyde 2,1-aminomutase (437 aa).

An N6-(pyridoxal phosphate)lysine modification is found at K274.

Belongs to the class-III pyridoxal-phosphate-dependent aminotransferase family. HemL subfamily. Homodimer. It depends on pyridoxal 5'-phosphate as a cofactor.

It is found in the cytoplasm. The catalysed reaction is (S)-4-amino-5-oxopentanoate = 5-aminolevulinate. It participates in porphyrin-containing compound metabolism; protoporphyrin-IX biosynthesis; 5-aminolevulinate from L-glutamyl-tRNA(Glu): step 2/2. The sequence is that of Glutamate-1-semialdehyde 2,1-aminomutase from Leptothrix cholodnii (strain ATCC 51168 / LMG 8142 / SP-6) (Leptothrix discophora (strain SP-6)).